We begin with the raw amino-acid sequence, 501 residues long: MDFPGLIKKIKEDLENRLVEKSKQPAFTDYWLINKTISLLKEYPSGFSYPILINEIELACSERNKLDNVFSSLEWLTKSDAVIYLEDQFHFHCYDYYYTPIPSLKLKDSEENTCEMILHSSFYLLFHEPFNILKGSTLRFSQSRIHQKWYLRKQIRFLPTTSFVPVLQYAASKSFVKSMVESTEHEFFQIRDITISKSDQGVKRITVELGRIISLDKKGAFLIDNNTNFIHFSGTYHDFPKLLDKQQYLLIPFWSTVWEGSTNWQDGMIGILVILSENDFEEKKCDSWQVGRLAAVNSNFLVLDNNGQRVKILYSNSQKHYFKDTYIGDLLCISPINHSSDNLSDYSCVSDTTTEILSNLENPLSSNFLRNDLCKFSNLFSGVSGHLKIQPLTLVITGFVANLTRQSDLNTSLVLPEVNPLTAKMEVIDCLRNSFWAALRPNCVSYFASMISGFKELFQKEMEFPIYLDLKSYKLGFHWCDIYVDSEHNCHIQKINSLPCE.

Interacts with dna2, pcn1 and rfc1.

The protein resides in the nucleus. The protein localises to the cytoplasm. Functionally, has a role in the progression of DNA replication and in the maintenance of genomic integrity. Acts during S phase, after initiation, where it is essential for completion. This Schizosaccharomyces pombe (strain 972 / ATCC 24843) (Fission yeast) protein is Cell division control protein 24 (cdc24).